We begin with the raw amino-acid sequence, 255 residues long: Indole-3-glycerol phosphate synthase (255 aa).

It belongs to the TrpC family.

The enzyme catalyses 1-(2-carboxyphenylamino)-1-deoxy-D-ribulose 5-phosphate + H(+) = (1S,2R)-1-C-(indol-3-yl)glycerol 3-phosphate + CO2 + H2O. It functions in the pathway amino-acid biosynthesis; L-tryptophan biosynthesis; L-tryptophan from chorismate: step 4/5. The protein is Indole-3-glycerol phosphate synthase of Streptococcus pneumoniae serotype 2 (strain D39 / NCTC 7466).